A 90-amino-acid polypeptide reads, in one-letter code: Small ribosomal subunit protein uS19 (90 aa).

This sequence belongs to the universal ribosomal protein uS19 family.

In terms of biological role, protein S19 forms a complex with S13 that binds strongly to the 16S ribosomal RNA. This is Small ribosomal subunit protein uS19 from Hydrogenovibrio crunogenus (strain DSM 25203 / XCL-2) (Thiomicrospira crunogena).